The chain runs to 138 residues: Trypsin inhibitor DE5 alpha chain (138 aa).

Cys40 and Cys86 are disulfide-bonded.

Belongs to the protease inhibitor I3 (leguminous Kunitz-type inhibitor) family. Heterodimer of an alpha and a beta chain linked by a disulfide bond.

Functionally, inhibition of trypsin. This chain is Trypsin inhibitor DE5 alpha chain, found in Adenanthera pavonina (Sandal bead tree).